A 291-amino-acid polypeptide reads, in one-letter code: 4-hydroxy-tetrahydrodipicolinate synthase (291 aa).

Thr-45 is a binding site for pyruvate. Residue Tyr-133 is the Proton donor/acceptor of the active site. Catalysis depends on Lys-161, which acts as the Schiff-base intermediate with substrate. Position 203 (Ile-203) interacts with pyruvate.

It belongs to the DapA family. Homotetramer.

It is found in the cytoplasm. The catalysed reaction is L-aspartate 4-semialdehyde + pyruvate = (2S,4S)-4-hydroxy-2,3,4,5-tetrahydrodipicolinate + H2O + H(+). It functions in the pathway amino-acid biosynthesis; L-lysine biosynthesis via DAP pathway; (S)-tetrahydrodipicolinate from L-aspartate: step 3/4. With respect to regulation, is allosterically feedback inhibited by lysine; the N.meningitidis enzyme is significantly more sensitive to lysine than the E.coli enzyme. Shows substrate inhibition by (S)-ASA, with a Ki of 1.7 mM. Catalyzes the condensation of (S)-aspartate-beta-semialdehyde [(S)-ASA] and pyruvate to 4-hydroxy-tetrahydrodipicolinate (HTPA). In Neisseria meningitidis serogroup B (strain ATCC BAA-335 / MC58), this protein is 4-hydroxy-tetrahydrodipicolinate synthase.